The chain runs to 284 residues: MAPRQKKPNKSDDDDGDLHRKKQSFFKQRFPGFKKKASELSVLCGNSVGFICYGPDNDLHVWPQSQDHNPQALHEIVAKFNALSDERRKNHACDLNDFPHHLKGLSREELRKHLLHLDSQLLGVREQKIEILKKTLTGSSEKDGARVSENSAISDHKLKIEPNLTDILSEDHLIRVSDKKLGSCDVFDELAYVVRGSRNLNENVSNYESKDAAYTGMDHLGTFGGNYLQEAAAELYQTYNLGNFCDDHVWDLEFASRLPPLHTFSDPLMTTNTCQTMSSDMISI.

A disordered region spans residues 1–20 (MAPRQKKPNKSDDDDGDLHR). In terms of domain architecture, MADS-box spans 21–66 (KKQSFFKQRFPGFKKKASELSVLCGNSVGFICYGPDNDLHVWPQSQ).

Interacts with MEE14/CBP1.

It localises to the nucleus. Functionally, probable transcription factor that may function in the maintenance of the proper function of the central cell in pollen tube attraction. In Arabidopsis thaliana (Mouse-ear cress), this protein is Agamous-like MADS-box protein AGL49.